A 220-amino-acid chain; its full sequence is Fructose-6-phosphate aldolase (220 aa).

Catalysis depends on K85, which acts as the Schiff-base intermediate with substrate.

Belongs to the transaldolase family. Type 3A subfamily. Homodecamer.

The protein localises to the cytoplasm. The enzyme catalyses beta-D-fructose 6-phosphate = dihydroxyacetone + D-glyceraldehyde 3-phosphate. Catalyzes the reversible formation of fructose 6-phosphate from dihydroxyacetone and D-glyceraldehyde 3-phosphate via an aldolization reaction. In Salmonella agona (strain SL483), this protein is Fructose-6-phosphate aldolase.